The sequence spans 330 residues: Aspartate--ammonia ligase (330 aa).

The protein belongs to the class-II aminoacyl-tRNA synthetase family. AsnA subfamily.

The protein resides in the cytoplasm. The catalysed reaction is L-aspartate + NH4(+) + ATP = L-asparagine + AMP + diphosphate + H(+). It participates in amino-acid biosynthesis; L-asparagine biosynthesis; L-asparagine from L-aspartate (ammonia route): step 1/1. This is Aspartate--ammonia ligase from Escherichia coli O139:H28 (strain E24377A / ETEC).